Reading from the N-terminus, the 275-residue chain is U6 snRNA phosphodiesterase 1 (275 aa).

Residues 1–25 form a disordered region; it reads MEFLKHYEDDEDQDDENNTKDENVN. Histidine 122 acts as the Proton acceptor in catalysis. Residues 122–124, tyrosine 206, and 208–214 contribute to the AMP site; these read HIS and NPEPHLS. Residues tyrosine 206 and 210–214 contribute to the UMP site; that span reads EPHLS. Histidine 212 serves as the catalytic Proton donor.

It belongs to the 2H phosphoesterase superfamily. USB1 family.

It localises to the nucleus. The catalysed reaction is a 3'-end uridylyl-uridine-RNA = a 3'-end 2',3'-cyclophospho-uridine-RNA + uridine. Functionally, 3'-5' RNA exonuclease that trims the 3' end of oligo(U) tracts of the pre-U6 small nuclear RNA (snRNA) molecule, leading to the formation of a mature U6 snRNA 3' end-terminated with a 2',3'-cyclic phosphate. Participates in the U6 snRNA 3' end processing that prevents U6 snRNA degradation. The protein is U6 snRNA phosphodiesterase 1 of Dictyostelium discoideum (Social amoeba).